The primary structure comprises 418 residues: Hepatic and glial cell adhesion molecule (418 aa).

The N-terminal stretch at 1 to 33 (MKREREAPSRAFSALRLAPFVYLLLIQTEPLEG) is a signal peptide. Positions 34–141 (VNITSPVRLI…TGEKTINLTV (108 aa)) constitute an Ig-like V-type domain. Residues 34 to 240 (VNITSPVRLI…VKITVYRRSS (207 aa)) lie on the Extracellular side of the membrane. N-linked (GlcNAc...) asparagine glycans are attached at residues asparagine 35, asparagine 138, asparagine 167, and asparagine 189. Positions 148 to 234 (PQVLVASTTV…QGRSPPVKIT (87 aa)) constitute an Ig-like C2-type domain. Cysteines 168 and 217 form a disulfide. A helical transmembrane segment spans residues 241–261 (LYIILSTGGIFLLVTLVTVCA). Residues 262–418 (CWKPSKKSGK…DEAGPVEISA (157 aa)) lie on the Cytoplasmic side of the membrane. Positions 271–418 (KKRKLEKQNS…DEAGPVEISA (148 aa)) are disordered. Serine 280 bears the Phosphoserine mark. Residues 287 to 308 (SDDRLKPEADTLPRSGEQERKN) are compositionally biased toward basic and acidic residues. Phosphoserine is present on residues serine 352 and serine 379. A compositionally biased stretch (low complexity) spans 385 to 400 (GSPGRSRSASRTLRTA).

As to quaternary structure, homodimer. Dimer formation occurs predominantly through cis interactions on the cell surface. Part of a complex containing MLC1, TRPV4, AQP4 and ATP1B1. Interacts with CLCN2. Post-translationally, N-glycosylated.

The protein resides in the cytoplasm. The protein localises to the cell membrane. Its function is as follows. Involved in regulating cell motility and cell-matrix interactions. May inhibit cell growth through suppression of cell proliferation. In glia, associates and targets CLCN2 at astrocytic processes and myelinated fiber tracts where it may regulate transcellular chloride flux involved in neuron excitability. The polypeptide is Hepatic and glial cell adhesion molecule (Bos taurus (Bovine)).